A 359-amino-acid chain; its full sequence is NADPH HC-toxin reductase 2 (359 aa).

NADP(+) is bound by residues R39, 67 to 68, 87 to 89, Y177, K181, 206 to 209, and T221; these read DL, VAT, and LGLV. Residue K181 is the Proton donor of the active site.

It belongs to the NAD(P)-dependent epimerase/dehydratase family.

Its function is as follows. In tandem with Hm1, NADPH-dependent HC toxin reductase (HCTR), which inactivates HC toxin, a cyclic tetrapeptide produced by the fungus Cochliobolus carbonum to permit infection and acting as an inhibitor of host histone deacetylases (HDACs), thus conferring resistance against C.carbonum race 1 in resistant cultivars (e.g. cv. B73 and cv. Wisconsin 22). Catalyzes the production of 8-hydroxy derivative of HC-toxin via the reduction of the 8-keto group of 2-amino-9,10-epoxy-8-oxo-decanoic acid, an amino acid of the HC-toxin. The protein is NADPH HC-toxin reductase 2 of Zea mays (Maize).